A 153-amino-acid polypeptide reads, in one-letter code: UPF0756 membrane protein lmo1568 (153 aa).

4 consecutive transmembrane segments (helical) span residues 6-26 (MLFL…SLII), 54-74 (WGVT…QIGF), 80-100 (SFKS…SILA), and 117-137 (LVFG…GPVI).

This sequence belongs to the UPF0756 family.

The protein localises to the cell membrane. The protein is UPF0756 membrane protein lmo1568 of Listeria monocytogenes serovar 1/2a (strain ATCC BAA-679 / EGD-e).